The sequence spans 424 residues: Zygote arrest protein 1 (424 aa).

Disordered stretches follow at residues 125–175 (RTLQ…PMRF) and 196–313 (GPGP…SPEL). Gly residues predominate over residues 141 to 150 (GAEGTTGGGS). A compositionally biased stretch (basic and acidic residues) spans 289-298 (RARDGGDGRE). Residues 326–409 (KYGYYHCKDC…RQDLCGRCKG (84 aa)) form a 3CxxC-type zinc finger.

The protein belongs to the ZAR1 family. In terms of assembly, interacts with YBX2. Ubiquitinated and degradaded by the proteasome during oocyte meiotic maturation, leading to MARDO (mitochondria-associated ribonucleoprotein domain) membraneless compartment dissolution. As to expression, ovary and testis.

The protein resides in the cytoplasm. It localises to the cytoplasmic ribonucleoprotein granule. In terms of biological role, mRNA-binding protein that mediates formation of MARDO (mitochondria-associated ribonucleoprotein domain), a membraneless compartment that stores maternal mRNAs in oocytes. MARDO assembly around mitochondria is directed by an increase in mitochondrial membrane potential during oocyte growth. Promotes formation of MARDO phase-separated membraneless compartment by undergoing liquid-liquid phase separation upon binding to maternal mRNAs. Binds to the 3'-UTR of maternal mRNAs. Maternal mRNAs stored in the MARDO are translationally repressed. Essential for female fertility and oocyte-to-embryo transition by coordinating maternal mRNA storage, translation and degradation. The polypeptide is Zygote arrest protein 1 (Homo sapiens (Human)).